Here is a 590-residue protein sequence, read N- to C-terminus: Kinetochore protein ndc-80 (590 aa).

Coiled coils occupy residues 269-342 (KGNE…KQIH) and 450-525 (ELET…MKLD).

The protein belongs to the NDC80/HEC1 family. As to quaternary structure, component of the NDC80 complex, which is composed of at least ndc-80 and him-10. The NDC80 complex interacts with knl-1. Interacts with the RZZ complex components rod-1 (via N-terminus) and zwl-1.

It localises to the nucleus. The protein localises to the chromosome. Its subcellular location is the centromere. The protein resides in the kinetochore. It is found in the cytoplasm. It localises to the cytoskeleton. Functionally, acts as a component of the essential kinetochore-associated ndc-80 complex, which is required for chromosome segregation in mitosis and meiosis and spindle checkpoint activity. Plays a role in kinetochore assembly and recruits the checkpoint protein mdf-2 and the spindly-like protein spdl-1 to unattached kinetochores. Mediates the formation of end-on kinetochore-microtubule attachments through recruitment of spdl-1. The ndc-80 complex synergistically enhances the affinity of the ska-1 complex for microtubules and may allow the ndc-80 complex to track depolymerizing microtubules. In Caenorhabditis elegans, this protein is Kinetochore protein ndc-80 (ndc-80).